A 460-amino-acid chain; its full sequence is ESX-1 secretion-associated protein EspB (460 aa).

3 disordered regions span residues 92–116 (LDND…SAEL), 303–335 (PSDG…PADT), and 405–441 (LGGG…TEDR).

Cleaved in the C-terminal region by MycP1.

Its subcellular location is the secreted. The sequence is that of ESX-1 secretion-associated protein EspB from Mycobacterium tuberculosis (strain CDC 1551 / Oshkosh).